A 104-amino-acid polypeptide reads, in one-letter code: Nucleoid-associated protein DICTH_1981 (104 aa).

A disordered region spans residues 85–104 (KSAEKMGSLADGLPLPPGLF).

It belongs to the YbaB/EbfC family. As to quaternary structure, homodimer.

The protein localises to the cytoplasm. It is found in the nucleoid. Functionally, binds to DNA and alters its conformation. May be involved in regulation of gene expression, nucleoid organization and DNA protection. In Dictyoglomus thermophilum (strain ATCC 35947 / DSM 3960 / H-6-12), this protein is Nucleoid-associated protein DICTH_1981.